A 289-amino-acid polypeptide reads, in one-letter code: Nucleotide-binding protein Francci3_1634 (289 aa).

13–20 (GLSGAGRS) lines the ATP pocket. 64–67 (DVRG) lines the GTP pocket.

This sequence belongs to the RapZ-like family.

Displays ATPase and GTPase activities. This chain is Nucleotide-binding protein Francci3_1634, found in Frankia casuarinae (strain DSM 45818 / CECT 9043 / HFP020203 / CcI3).